A 71-amino-acid chain; its full sequence is ATP synthase F(0) complex subunit e, mitochondrial (71 aa).

At Lys34 the chain carries N6-acetyllysine. Ser68 carries the phosphoserine modification.

It belongs to the ATPase e subunit family. In terms of assembly, component of the ATP synthase complex composed at least of ATP5F1A/subunit alpha, ATP5F1B/subunit beta, ATP5MC1/subunit c (homooctomer), MT-ATP6/subunit a, MT-ATP8/subunit 8, ATP5ME/subunit e, ATP5MF/subunit f, ATP5MG/subunit g, ATP5MK/subunit k, ATP5MJ/subunit j, ATP5F1C/subunit gamma, ATP5F1D/subunit delta, ATP5F1E/subunit epsilon, ATP5PF/subunit F6, ATP5PB/subunit b, ATP5PD/subunit d, ATP5PO/subunit OSCP. ATP synthase complex consists of a soluble F(1) head domain (subunits alpha(3) and beta(3)) - the catalytic core - and a membrane F(0) domain - the membrane proton channel (subunits c, a, 8, e, f, g, k and j). These two domains are linked by a central stalk (subunits gamma, delta, and epsilon) rotating inside the F1 region and a stationary peripheral stalk (subunits F6, b, d, and OSCP). As to expression, mammary gland, liver, kidney, heart, spleen, brain and lung.

The protein resides in the mitochondrion. The protein localises to the mitochondrion inner membrane. Subunit e, of the mitochondrial membrane ATP synthase complex (F(1)F(0) ATP synthase or Complex V) that produces ATP from ADP in the presence of a proton gradient across the membrane which is generated by electron transport complexes of the respiratory chain. ATP synthase complex consist of a soluble F(1) head domain - the catalytic core - and a membrane F(1) domain - the membrane proton channel. These two domains are linked by a central stalk rotating inside the F(1) region and a stationary peripheral stalk. During catalysis, ATP synthesis in the catalytic domain of F(1) is coupled via a rotary mechanism of the central stalk subunits to proton translocation. In vivo, can only synthesize ATP although its ATP hydrolase activity can be activated artificially in vitro. Part of the complex F(0) domain. The sequence is that of ATP synthase F(0) complex subunit e, mitochondrial from Mus musculus (Mouse).